The primary structure comprises 84 residues: Small ribosomal subunit protein uS17 (84 aa).

The protein belongs to the universal ribosomal protein uS17 family. Part of the 30S ribosomal subunit.

Its function is as follows. One of the primary rRNA binding proteins, it binds specifically to the 5'-end of 16S ribosomal RNA. This chain is Small ribosomal subunit protein uS17, found in Thermoanaerobacter pseudethanolicus (strain ATCC 33223 / 39E) (Clostridium thermohydrosulfuricum).